Reading from the N-terminus, the 141-residue chain is Large ribosomal subunit protein uL11 (141 aa).

Belongs to the universal ribosomal protein uL11 family. In terms of assembly, part of the ribosomal stalk of the 50S ribosomal subunit. Interacts with L10 and the large rRNA to form the base of the stalk. L10 forms an elongated spine to which L12 dimers bind in a sequential fashion forming a multimeric L10(L12)X complex. Post-translationally, one or more lysine residues are methylated.

Its function is as follows. Forms part of the ribosomal stalk which helps the ribosome interact with GTP-bound translation factors. The sequence is that of Large ribosomal subunit protein uL11 from Chlorobaculum parvum (strain DSM 263 / NCIMB 8327) (Chlorobium vibrioforme subsp. thiosulfatophilum).